A 134-amino-acid polypeptide reads, in one-letter code: UPF0412 protein YaaI (134 aa).

The first 23 residues, 1–23, serve as a signal peptide directing secretion; it reads MKSVFTISASLAISLMLCCTAQA.

This sequence belongs to the UPF0412 family.

The polypeptide is UPF0412 protein YaaI (Escherichia coli (strain ATCC 8739 / DSM 1576 / NBRC 3972 / NCIMB 8545 / WDCM 00012 / Crooks)).